A 732-amino-acid polypeptide reads, in one-letter code: MVSPTQITPVHPDVLHALKICQYHDPHGVYGWHEVDAERAVIRTRHIGAERVETLLSDSTVVELAAVGDDIFEAIVDHDASCDYRLRIHWQGGQVTEQADAYHFLPTLGDLDLHLINEGRHERLWEVLGANPTTITTAMGDVEGTAFAVWAPNASGVAVIGDFCGWNPSQYPMRSLGSTGIWELFIPNIGVGTVYKFAIHTHEGHRLDKADPMAKRAEVAPATGSIIASSSYTWNDDTWMTNRAHTDHDNTAMSVYEVHLGSWSQGQNYEELATNLVDYVKEMGYTHVEFLPVAEHPFGGSWGYQVSGYYAPTSRWGTPDQLRLLIDAFHQAGIGVIVDWVPAHFPKDAFALGRFDGQALYEHPDWRRGEQKDWGTYVFDFGRNEVRNFLVANALYWLEEFHVDGLRVDAVASMLYLDYSREPGEWLPNIYGGRENLEAVQFLQEMNATVHKSHPGVMTIAEESTSWPGVTSPTWEGGLGFSMKWNMGWMNDTLEYFSHEPIHRMYHHNDITFSMVYAYSEKFVLPFSHDEVVHGKGSLWTRMPGDAWNKAAGLRTLYAYMYAHPGKNLLFQGQEFGQVKEWSEERSLDWGDMDGWEGEYHRGIRTLVQDLNALYKDSPALYSQDNNPAGFSWTKSDDAANNILSFVRYGADGSKILAVFNFGGADHPSYKLGVPEGGNWKCILNTDAGIYEGEDNYLDSDVMAWDTDWDGYQHSLTVHIPAMSGQLYRWEA.

D409 (nucleophile) is an active-site residue. Catalysis depends on E462, which acts as the Proton donor.

The protein belongs to the glycosyl hydrolase 13 family. GlgB subfamily. As to quaternary structure, monomer.

It catalyses the reaction Transfers a segment of a (1-&gt;4)-alpha-D-glucan chain to a primary hydroxy group in a similar glucan chain.. The protein operates within glycan biosynthesis; glycogen biosynthesis. Catalyzes the formation of the alpha-1,6-glucosidic linkages in glycogen by scission of a 1,4-alpha-linked oligosaccharide from growing alpha-1,4-glucan chains and the subsequent attachment of the oligosaccharide to the alpha-1,6 position. The chain is 1,4-alpha-glucan branching enzyme GlgB from Corynebacterium diphtheriae (strain ATCC 700971 / NCTC 13129 / Biotype gravis).